The following is a 138-amino-acid chain: uncharacterized protein (138 aa).

This is an uncharacterized protein from Caenorhabditis elegans.